A 318-amino-acid polypeptide reads, in one-letter code: Deoxymugineic acid synthase 1 (318 aa).

Residue aspartate 48 participates in NADP(+) binding. Tyrosine 53 (proton donor) is an active-site residue. Histidine 116 is a binding site for substrate. Residues 162-163 (CN), glutamine 184, 262-270 (FDEARMREN), and 277-285 (ELTEEERQR) each bind NADP(+).

It belongs to the aldo/keto reductase family. As to expression, confined to cells participating in long distance transport (e.g. in the parts of pericycle cells adjacent to the protoxylem and metaxylem) in roots and to vascular bundles in shoots.

The catalysed reaction is 2'-deoxymugineate + NAD(+) = 3''-deamino-3''-oxonicotianamine + NADH + H(+). It carries out the reaction 2'-deoxymugineate + NADP(+) = 3''-deamino-3''-oxonicotianamine + NADPH + H(+). It functions in the pathway siderophore biosynthesis. Functionally, catalyzes the reduction of a 3''-keto intermediate during the biosynthesis of 2'-deoxymugineic acid (DMA) from L-Met. Involved in the formation of phytosiderophores (MAs) belonging to the mugineic acid family and required to acquire iron. The protein is Deoxymugineic acid synthase 1 of Oryza sativa subsp. japonica (Rice).